The following is a 447-amino-acid chain: C4-dicarboxylate transport protein (447 aa).

The next 8 helical transmembrane spans lie at 22–42 (FQVI…PLVG), 52–72 (FINL…VTGI), 90–110 (AYFL…AHVV), 159–179 (GNIL…ASVG), 199–219 (LVHI…AFTI), 232–252 (WLVG…LGVV), 325–347 (LFIA…LLVA), and 366–386 (AATL…ILGV).

The protein belongs to the dicarboxylate/amino acid:cation symporter (DAACS) (TC 2.A.23) family.

The protein localises to the cell inner membrane. Responsible for the transport of dicarboxylates such as succinate, fumarate, and malate from the periplasm across the membrane. This is C4-dicarboxylate transport protein from Stenotrophomonas maltophilia (strain R551-3).